The chain runs to 126 residues: Large ribosomal subunit protein uL22 (126 aa).

The protein belongs to the universal ribosomal protein uL22 family. Part of the 50S ribosomal subunit.

Its function is as follows. This protein binds specifically to 23S rRNA; its binding is stimulated by other ribosomal proteins, e.g. L4, L17, and L20. It is important during the early stages of 50S assembly. It makes multiple contacts with different domains of the 23S rRNA in the assembled 50S subunit and ribosome. Functionally, the globular domain of the protein is located near the polypeptide exit tunnel on the outside of the subunit, while an extended beta-hairpin is found that lines the wall of the exit tunnel in the center of the 70S ribosome. In Jannaschia sp. (strain CCS1), this protein is Large ribosomal subunit protein uL22.